The chain runs to 341 residues: Endolytic peptidoglycan transglycosylase RlpA (341 aa).

The N-terminal stretch at 1 to 26 is a signal peptide; sequence MSKRVRSSLILPAVCGLGLAAVLLSS. Residue cysteine 27 is the site of N-palmitoyl cysteine attachment. Residue cysteine 27 is the site of S-diacylglycerol cysteine attachment. Positions 260–341 constitute an SPOR domain; that stretch reads SLPADGLYLQ…LGQPTLVRPD (82 aa).

It belongs to the RlpA family.

It is found in the cell membrane. Its function is as follows. Lytic transglycosylase with a strong preference for naked glycan strands that lack stem peptides. Required for efficient separation of daughter cells and maintenance of rod shape. This chain is Endolytic peptidoglycan transglycosylase RlpA, found in Pseudomonas aeruginosa (strain UCBPP-PA14).